The primary structure comprises 90 residues: Large ribosomal subunit protein bL27 (90 aa).

The disordered stretch occupies residues 1–24 (MAHKKGTGSTRNGRDSNSKRLGVK).

This sequence belongs to the bacterial ribosomal protein bL27 family.

In Prochlorococcus marinus (strain NATL1A), this protein is Large ribosomal subunit protein bL27.